The primary structure comprises 159 residues: MNIQIVTVGKLKEKYLVQGIAEYLKRLSAYAKVTIVEVPDEKAPEVLSDAEMKQVKDKEGARILAKIPDDAYVIALAIDGKMKSSEEFAADLDKLATYGKSKVTFVIGGSLGLSEAVLKRSNERISFGRLTLPHQLMRLVLVEQVYRAFRIVRGEPYHK.

S-adenosyl-L-methionine-binding positions include Leu-76, Gly-108, and 127-132 (FGRLTL).

Belongs to the RNA methyltransferase RlmH family. As to quaternary structure, homodimer.

The protein localises to the cytoplasm. The catalysed reaction is pseudouridine(1915) in 23S rRNA + S-adenosyl-L-methionine = N(3)-methylpseudouridine(1915) in 23S rRNA + S-adenosyl-L-homocysteine + H(+). Specifically methylates the pseudouridine at position 1915 (m3Psi1915) in 23S rRNA. The chain is Ribosomal RNA large subunit methyltransferase H from Listeria monocytogenes serovar 1/2a (strain ATCC BAA-679 / EGD-e).